Here is a 774-residue protein sequence, read N- to C-terminus: 5-methyltetrahydropteroyltriglutamate--homocysteine methyltransferase (774 aa).

5-methyltetrahydropteroyltri-L-glutamate is bound by residues 15-18 (RELK) and Lys-116. L-homocysteine is bound by residues 445–447 (IGS) and Glu-498. L-methionine is bound by residues 445–447 (IGS) and Glu-498. Residues 529 to 530 (RC) and Trp-575 each bind 5-methyltetrahydropteroyltri-L-glutamate. Residue Asp-613 participates in L-homocysteine binding. Asp-613 is a binding site for L-methionine. Glu-619 contacts 5-methyltetrahydropteroyltri-L-glutamate. The Zn(2+) site is built by His-655, Cys-657, and Glu-679. His-708 serves as the catalytic Proton donor. Cys-740 is a binding site for Zn(2+).

It belongs to the vitamin-B12 independent methionine synthase family. The cofactor is Zn(2+).

The enzyme catalyses 5-methyltetrahydropteroyltri-L-glutamate + L-homocysteine = tetrahydropteroyltri-L-glutamate + L-methionine. Its pathway is amino-acid biosynthesis; L-methionine biosynthesis via de novo pathway; L-methionine from L-homocysteine (MetE route): step 1/1. Its function is as follows. Catalyzes the transfer of a methyl group from 5-methyltetrahydrofolate to homocysteine resulting in methionine formation. This chain is 5-methyltetrahydropteroyltriglutamate--homocysteine methyltransferase, found in Flavobacterium johnsoniae (strain ATCC 17061 / DSM 2064 / JCM 8514 / BCRC 14874 / CCUG 350202 / NBRC 14942 / NCIMB 11054 / UW101) (Cytophaga johnsonae).